Here is a 96-residue protein sequence, read N- to C-terminus: Protein RnfH (96 aa).

It belongs to the UPF0125 (RnfH) family.

This Klebsiella pneumoniae (strain 342) protein is Protein RnfH.